We begin with the raw amino-acid sequence, 539 residues long: Tripartite motif-containing protein 26 (539 aa).

The RING-type zinc-finger motif lies at 16-57; the sequence is CSICLDYLRDPVTIDCGHVFCRSCTTDVRPISGSRPVCPLCK. A B box-type zinc finger spans residues 97-138; it reads QDAKLCERHREKLHYYCEDDGKLLCVMCRESREHRPHTAVLM. Zn(2+) contacts are provided by cysteine 102, histidine 105, cysteine 124, and histidine 130. Residues 188-227 adopt a coiled-coil conformation; the sequence is IVAEFEQGHQFLREREEHLLEQLAKLEQELTEGREKFKSR. Residues 295–539 enclose the B30.2/SPRY domain; sequence RGLREFQGKL…WPGTRLLLRP (245 aa). The tract at residues 376–437 is disordered; the sequence is REGWSEDEEE…EEEEEVLESC (62 aa). Residues 380–434 are compositionally biased toward acidic residues; the sequence is SEDEEEGDEEEEGEEEEEEEEAGYGDGYDDWETDEDEESLGDEEEEEEEEEEEVL.

It belongs to the TRIM/RBCC family. Interacts with TBK1; this interaction bridges together TBK1 and NEMO in order to activate TBK1. Interacts with INCA1. In terms of processing, autoubiquitinates upon viral infection. In turn, autoubiquitinated TRIM26 recruits NEMO and bridges TBK1-NEMO interaction.

The protein resides in the cytoplasm. It localises to the nucleus. The enzyme catalyses S-ubiquitinyl-[E2 ubiquitin-conjugating enzyme]-L-cysteine + [acceptor protein]-L-lysine = [E2 ubiquitin-conjugating enzyme]-L-cysteine + N(6)-ubiquitinyl-[acceptor protein]-L-lysine.. In terms of biological role, E3 ubiquitin-protein ligase which regulates the IFN-beta production and antiviral response downstream of various DNA-encoded pattern-recognition receptors (PRRs). Also plays a central role in determining the response to different forms of oxidative stress by controlling levels of DNA glycosylases NEIL1, NEIL3 and NTH1 that are involved in repair of damaged DNA. Promotes nuclear IRF3 ubiquitination and proteasomal degradation. Bridges together TBK1 and NEMO during the innate response to viral infection leading to the activation of TBK1. Positively regulates LPS-mediated inflammatory innate immune response by catalyzing the 'Lys-11'-linked polyubiquitination of TAB1 to enhance its activation and subsequent NF-kappa-B and MAPK signaling. In a manner independent of its catalytic activity, inhibits WWP2, a SOX2-directed E3 ubiquitin ligase, and thus protects SOX2 from polyubiquitination and proteasomal degradation. Ubiquitinates the histone acetyltransferase protein complex component PHF20 and thereby triggers its degradation in the nucleus after its recruitment by the histone demethylase KDM6B, serving as a scaffold protein. Upon induction by TGF-beta, ubiquitinates the TFIID component TAF7 for proteasomal degradation. Induces ferroptosis by ubiquitinating SLC7A11, a critical protein for lipid reactive oxygen species (ROS) scavenging. In Pan troglodytes (Chimpanzee), this protein is Tripartite motif-containing protein 26 (TRIM26).